Reading from the N-terminus, the 376-residue chain is Glutamate 5-kinase (376 aa).

Residue Lys-17 participates in ATP binding. Substrate contacts are provided by Ser-57, Asp-144, and Asn-156. 176–177 (TD) contacts ATP. The region spanning 283 to 361 (KGQLVLDEGA…SEINQLLGYS (79 aa)) is the PUA domain.

It belongs to the glutamate 5-kinase family.

Its subcellular location is the cytoplasm. The enzyme catalyses L-glutamate + ATP = L-glutamyl 5-phosphate + ADP. It participates in amino-acid biosynthesis; L-proline biosynthesis; L-glutamate 5-semialdehyde from L-glutamate: step 1/2. Catalyzes the transfer of a phosphate group to glutamate to form L-glutamate 5-phosphate. The protein is Glutamate 5-kinase of Hydrogenovibrio crunogenus (strain DSM 25203 / XCL-2) (Thiomicrospira crunogena).